Here is a 181-residue protein sequence, read N- to C-terminus: Alkyl hydroperoxide reductase AhpD (181 aa).

The active-site Proton donor is the cysteine 131. Residues cysteine 131 and cysteine 134 are joined by a disulfide bond. The Cysteine sulfenic acid (-SOH) intermediate role is filled by cysteine 134.

It belongs to the AhpD family.

The catalysed reaction is N(6)-[(R)-dihydrolipoyl]-L-lysyl-[lipoyl-carrier protein] + a hydroperoxide = N(6)-[(R)-lipoyl]-L-lysyl-[lipoyl-carrier protein] + an alcohol + H2O. Antioxidant protein with alkyl hydroperoxidase activity. Required for the reduction of the AhpC active site cysteine residues and for the regeneration of the AhpC enzyme activity. The protein is Alkyl hydroperoxide reductase AhpD of Azorhizobium caulinodans (strain ATCC 43989 / DSM 5975 / JCM 20966 / LMG 6465 / NBRC 14845 / NCIMB 13405 / ORS 571).